The primary structure comprises 100 residues: MRVYHHIYVYTYILSAVIYSQDLFPSWVVQLSTVKSDIIRPYLIHGNSFLFQILQVLITAPSTRCKFSFQNSIPFIFLALLLSQDFHVFLGIELHAFFVS.

3 consecutive transmembrane segments (helical) span residues 9–29 (VYTYILSAVIYSQDLFPSWVV), 41–61 (PYLIHGNSFLFQILQVLITAP), and 72–92 (SIPFIFLALLLSQDFHVFLGI).

It localises to the membrane. This is an uncharacterized protein from Saccharomyces cerevisiae (strain ATCC 204508 / S288c) (Baker's yeast).